The primary structure comprises 129 residues: Small ribosomal subunit protein uS12 (129 aa).

At D89 the chain carries 3-methylthioaspartic acid.

Belongs to the universal ribosomal protein uS12 family. Part of the 30S ribosomal subunit. Contacts proteins S8 and S17. May interact with IF1 in the 30S initiation complex.

Its function is as follows. With S4 and S5 plays an important role in translational accuracy. Interacts with and stabilizes bases of the 16S rRNA that are involved in tRNA selection in the A site and with the mRNA backbone. Located at the interface of the 30S and 50S subunits, it traverses the body of the 30S subunit contacting proteins on the other side and probably holding the rRNA structure together. The combined cluster of proteins S8, S12 and S17 appears to hold together the shoulder and platform of the 30S subunit. The chain is Small ribosomal subunit protein uS12 from Helicobacter hepaticus (strain ATCC 51449 / 3B1).